The primary structure comprises 455 residues: UDP-N-acetylmuramoyl-tripeptide--D-alanyl-D-alanine ligase (455 aa).

107-113 (GSCGKTS) lines the ATP pocket.

The protein belongs to the MurCDEF family. MurF subfamily.

It is found in the cytoplasm. The enzyme catalyses D-alanyl-D-alanine + UDP-N-acetyl-alpha-D-muramoyl-L-alanyl-gamma-D-glutamyl-meso-2,6-diaminopimelate + ATP = UDP-N-acetyl-alpha-D-muramoyl-L-alanyl-gamma-D-glutamyl-meso-2,6-diaminopimeloyl-D-alanyl-D-alanine + ADP + phosphate + H(+). It functions in the pathway cell wall biogenesis; peptidoglycan biosynthesis. Involved in cell wall formation. Catalyzes the final step in the synthesis of UDP-N-acetylmuramoyl-pentapeptide, the precursor of murein. This is UDP-N-acetylmuramoyl-tripeptide--D-alanyl-D-alanine ligase from Buchnera aphidicola subsp. Acyrthosiphon pisum (strain APS) (Acyrthosiphon pisum symbiotic bacterium).